Reading from the N-terminus, the 708-residue chain is Capsid scaffolding protein (708 aa).

Active-site charge relay system residues include His63, Ser132, and His157. 3 disordered regions span residues 270-339, 455-565, and 593-620; these read SAER…MSHP, HPSY…QQQR, and ALPSAASSSPTTTTVCTPTSELTSGGGE. A compositionally biased stretch (low complexity) spans 284-293; it reads PAAGARVPSS. A compositionally biased stretch (pro residues) spans 294-311; that stretch reads SPSPPVEPPSPVQPPALP. A compositionally biased stretch (low complexity) spans 326 to 339; the sequence is SPSEPAEAASMSHP. Residues 333–352 are interaction with pAP; it reads AASMSHPLSAAVPAATAPPG. Residues 498–513 show a composition bias toward basic residues; the sequence is KQHRHGGSGGHNKRRK. Short sequence motifs (nuclear localization signal) lie at residues 510 to 515 and 537 to 543; these read KRRKET and RARKRLK. Over residues 593–615 the composition is skewed to low complexity; it reads ALPSAASSSPTTTTVCTPTSELT. The interaction with major capsid protein stretch occupies residues 688–708; that stretch reads PPKDMVDLNRRIFVAALNKLE.

It belongs to the herpesviridae capsid scaffolding protein family. As to quaternary structure, homomultimer. Interacts with major capsid protein. Exists in a monomer-dimer equilibrium with the dimer being the active species. Capsid scaffolding protein is cleaved by assemblin after formation of the spherical procapsid. As a result, the capsid obtains its mature, icosahedral shape. Cleavages occur at two or more sites: release (R-site) and maturation (M-site).

Its subcellular location is the host cytoplasm. The protein localises to the host nucleus. The enzyme catalyses Cleaves -Ala-|-Ser- and -Ala-|-Ala- bonds in the scaffold protein.. Its function is as follows. Acts as a scaffold protein by binding major capsid protein in the cytoplasm, inducing the nuclear localization of both proteins. Multimerizes in the nucleus such as major capsid protein forms the icosahedral T=16 capsid. Autocatalytic cleavage releases the assembly protein, and subsequently abolishes interaction with major capsid protein. Cleavages products are evicted from the capsid before or during DNA packaging. Protease that plays an essential role in virion assembly within the nucleus. Catalyzes the cleavage of the assembly protein after formation of the spherical procapsid. By that cleavage, the capsid matures and gains its icosahedral shape. The cleavage sites seem to include -Ala-Ser-, -Ala-Ala-, as well as Ala-Thr bonds. Assemblin and cleavages products are evicted from the capsid before or during DNA packaging. In terms of biological role, plays a major role in capsid assembly. Acts as a scaffold protein by binding major capsid protein. Multimerizes in the nucleus such as major capsid protein forms the icosahedral T=16 capsid. Cleaved by assemblin after capsid completion. The cleavages products are evicted from the capsid before or during DNA packaging. The sequence is that of Capsid scaffolding protein (UL80) from Homo sapiens (Human).